Here is an 87-residue protein sequence, read N- to C-terminus: Small ribosomal subunit protein uS17 (87 aa).

It belongs to the universal ribosomal protein uS17 family. In terms of assembly, part of the 30S ribosomal subunit.

In terms of biological role, one of the primary rRNA binding proteins, it binds specifically to the 5'-end of 16S ribosomal RNA. This chain is Small ribosomal subunit protein uS17, found in Alcanivorax borkumensis (strain ATCC 700651 / DSM 11573 / NCIMB 13689 / SK2).